Reading from the N-terminus, the 170-residue chain is Viral interleukin-10 homolog (170 aa).

Residues 1 to 23 (MERRLVVTLQCLVLLYLAPECGG) form the signal peptide. Intrachain disulfides connect Cys-27–Cys-119 and Cys-73–Cys-125. Residues 97-145 (EAKDHVNSLGENLKTLRLRLRRCHRFLPCENKSKAVEQIKNAFNKLQEK) are a coiled coil. The N-linked (GlcNAc...) asparagine; by host glycan is linked to Asn-127.

This sequence belongs to the IL-10 family. In terms of assembly, homodimer.

The protein resides in the secreted. Functionally, inhibits IFN-gamma synthesis. Down-regulates the expression of the host TAP1 gene (transporter associated with antigen processing), thereby affecting the transport of peptides into the endoplasmic reticulum and subsequent peptide loading by MHC class I molecules. In consequence, infected cells are masked for immune recognition by cytotoxic T-lymphocytes. This is Viral interleukin-10 homolog from Epstein-Barr virus (strain AG876) (HHV-4).